A 1062-amino-acid polypeptide reads, in one-letter code: Platelet-derived growth factor receptor alpha (1062 aa).

The N-terminal stretch at 1-27 is a signal peptide; sequence MFPPSSAPLLLPQLEELVVPLHTAFTL. 5 consecutive Ig-like C2-type domains span residues 28 to 96, 91 to 184, 190 to 281, 287 to 381, and 389 to 493; these read TCQG…VYVP, IYVY…VHGW, LHVE…KQIA, SEFM…RTVS, and PAVI…IKLV. Topologically, residues 28–504 are extracellular; sequence TCQGEATIAW…NGPHPELTVA (477 aa). A disulfide bridge connects residues cysteine 29 and cysteine 74. N-linked (GlcNAc...) asparagine glycans are attached at residues asparagine 79 and asparagine 132. Disulfide bonds link cysteine 124–cysteine 165 and cysteine 211–cysteine 265. N-linked (GlcNAc...) asparagine glycosylation is found at asparagine 273, asparagine 333, asparagine 366, asparagine 433, and asparagine 444. A disulfide bond links cysteine 410 and cysteine 477. A helical membrane pass occupies residues 505 to 525; it reads AAVLVLLVIVIISLIVLVVIW. Residues 526 to 1062 lie on the Cytoplasmic side of the membrane; it reads KQKPRYEIRW…CSDLVEDSFL (537 aa). Tyrosine 548 and tyrosine 550 each carry phosphotyrosine; by autocatalysis. The Protein kinase domain occupies 569–945; the sequence is LVLGRILGSG…HYERVNHEFL (377 aa). ATP contacts are provided by residues 575–583 and lysine 603; that span reads LGSGAFGKV. 5 positions are modified to phosphotyrosine; by autocatalysis: tyrosine 697, tyrosine 708, tyrosine 719, tyrosine 731, and tyrosine 739. A disordered region spans residues 734–754; the sequence is LQGSNYDHPPSQKGSNDGEMD. Residue aspartate 793 is the Proton acceptor of the active site. 2 positions are modified to phosphotyrosine; by autocatalysis: tyrosine 824 and tyrosine 963. Over residues 975-986 the composition is skewed to basic and acidic residues; it reads KDRESGFDEQRL. The interval 975–1034 is disordered; sequence KDRESGFDEQRLSSDSGYIIPLPDLDPISDEEYGKRNRHSSQTSEESAIETGSSSSTFAK. Tyrosine 992 is subject to Phosphotyrosine; by autocatalysis. Residues 1014-1032 show a composition bias toward polar residues; that stretch reads SSQTSEESAIETGSSSSTF.

Belongs to the protein kinase superfamily. Tyr protein kinase family. CSF-1/PDGF receptor subfamily. In terms of assembly, interacts with homodimeric pdgfa, pdgfb and pdgfc, and with heterodimers formed by pdgfa and pdgfb. monomer in the absence of bound ligand. Interaction with dimeric pdgfa, pdgfb and/or pdgfc leads to receptor dimerization, where both pdgfra homodimers and heterodimers with pdgfrb are observed. Ubiquitinated, leading to its degradation. In terms of processing, autophosphorylated on tyrosine residues upon ligand binding. Autophosphorylation occurs in trans, i.e. one subunit of the dimeric receptor phosphorylates tyrosine residues on the other subunit.

The protein resides in the cell membrane. It carries out the reaction L-tyrosyl-[protein] + ATP = O-phospho-L-tyrosyl-[protein] + ADP + H(+). Present in an inactive conformation in the absence of bound ligand. Binding of pdgfa and/or pdgfb leads to dimerization and activation by autophosphorylation on tyrosine residues. Functionally, tyrosine-protein kinase that acts as a cell-surface receptor for pdgfa, pdgfb and pdgfc and plays an essential role in the regulation of embryonic development, cell proliferation, survival and chemotaxis. Depending on the context, promotes or inhibits cell proliferation and cell migration. Plays an important role in the differentiation of bone marrow-derived mesenchymal stem cells. Required for normal skeleton development. Required for normal development of the gastrointestinal tract. Plays a role in cell migration and chemotaxis in wound healing. Plays a role in platelet activation, secretion of agonists from platelet granules, and in thrombin-induced platelet aggregation. Binding of its cognate ligands - homodimeric pdgfa, homodimeric pdgfb, heterodimers formed by pdgfa and pdgfb or homodimeric pdgfc -leads to the activation of several signaling cascades; the response depends on the nature of the bound ligand and is modulated by the formation of heterodimers between pdgfra and pdgfrb. Phosphorylates pik3r1, plcg1, and ptpn11. Activation of plcg1 leads to the production of the cellular signaling molecules diacylglycerol and inositol 1,4,5-trisphosphate, mobilization of cytosolic Ca(2+) and the activation of protein kinase C. Phosphorylates pik3r1, the regulatory subunit of phosphatidylinositol 3-kinase, and thereby mediates activation of the AKT1 signaling pathway. Mediates activation of hras and of the MAP kinases mapk1/erk2 and/or mapk3/erk1. Promotes activation of STAT family members stat1, stat3 and stat5a and/or stat5b. Receptor signaling is down-regulated by protein phosphatases that dephosphorylate the receptor and its down-stream effectors, and by rapid internalization of the activated receptor. The sequence is that of Platelet-derived growth factor receptor alpha (pdgfra) from Takifugu rubripes (Japanese pufferfish).